Consider the following 279-residue polypeptide: Cholesterol 25-hydroxylase-like protein 2 (279 aa).

N-linked (GlcNAc...) asparagine glycans are attached at residues asparagine 6 and asparagine 13. 3 membrane-spanning segments follow: residues 36-56 (LFPV…YTVL), 86-106 (LALT…AQWL), and 120-140 (LTAF…QYYL). One can recognise a Fatty acid hydroxylase domain in the interval 128–262 (VGCTVVFDFQ…FAHWDWLGGT (135 aa)). The short motif at 141 to 145 (WHLLH) is the Histidine box-1 element. A Histidine box-2 motif is present at residues 156-160 (HALHH). A run of 2 transmembrane segments spans residues 165–185 (TFSL…GFWT) and 189–209 (PLLL…NIWV). The short motif at 237–243 (RHDAHHQ) is the Histidine box-3 element.

This sequence belongs to the sterol desaturase family. It depends on Fe cation as a cofactor.

The protein localises to the endoplasmic reticulum membrane. Its function is as follows. May catalyze the formation of 25-hydroxycholesterol from cholesterol. In Danio rerio (Zebrafish), this protein is Cholesterol 25-hydroxylase-like protein 2.